The chain runs to 223 residues: Glutathione S-transferase U6 (223 aa).

One can recognise a GST N-terminal domain in the interval 5 to 84; sequence EEVKLLGIWA…YIDETWKHNP (80 aa). Glutathione-binding positions include 15 to 16, 41 to 42, 55 to 56, and 68 to 69; these read SP, NK, KI, and ES. Positions 89 to 216 constitute a GST C-terminal domain; it reads DPFQRSKARV…EKHIEHMNNM (128 aa). Position 150 is a phosphothreonine (Thr-150).

It belongs to the GST superfamily. Tau family.

The protein resides in the cytoplasm. It localises to the cytosol. The enzyme catalyses RX + glutathione = an S-substituted glutathione + a halide anion + H(+). In terms of biological role, may be involved in the conjugation of reduced glutathione to a wide number of exogenous and endogenous hydrophobic electrophiles and have a detoxification role against certain herbicides. The chain is Glutathione S-transferase U6 (GSTU6) from Arabidopsis thaliana (Mouse-ear cress).